Consider the following 136-residue polypeptide: Large ribosomal subunit protein uL16 (136 aa).

It belongs to the universal ribosomal protein uL16 family. Part of the 50S ribosomal subunit.

Binds 23S rRNA and is also seen to make contacts with the A and possibly P site tRNAs. This Serratia proteamaculans (strain 568) protein is Large ribosomal subunit protein uL16.